The following is a 545-amino-acid chain: uncharacterized protein (545 aa).

Disordered stretches follow at residues 1 to 162 (MSSG…DPQE) and 200 to 250 (YPPV…EPPP). The segment covering 86–100 (NYRSHSSADYLTPNS) has biased composition (polar residues). Composition is skewed to low complexity over residues 109–128 (TTPR…TATK) and 141–152 (SGASTSSGTSST). Composition is skewed to polar residues over residues 212–221 (SSRTGTLQRT) and 228–244 (ISST…QMQS). A PDZ domain is found at 458 to 540 (RVLVEKMMPG…VTITLLPAVG (83 aa)).

This is an uncharacterized protein from Caenorhabditis elegans.